The chain runs to 91 residues: Probable Fe(2+)-trafficking protein (91 aa).

Belongs to the Fe(2+)-trafficking protein family.

Could be a mediator in iron transactions between iron acquisition and iron-requiring processes, such as synthesis and/or repair of Fe-S clusters in biosynthetic enzymes. The polypeptide is Probable Fe(2+)-trafficking protein (Glaesserella parasuis serovar 5 (strain SH0165) (Haemophilus parasuis)).